The following is a 343-amino-acid chain: Mitotic checkpoint protein bub-3 (343 aa).

7 WD repeats span residues 21 to 62 (PPFV…DISE), 67 to 105 (THGKPLLTCTFAGYNKVAFGGVDHNVKLADIETGNGTQL), 107 to 146 (SHALAVRCMEFNPMSSLIVSGGWDSSVKLWDARSYGNGAI), 150 to 187 (NVSSSVYAMDVLKHTILVGTKDRKIFMYDSRKLREPLQ), 192 to 232 (PLKY…EMMK), 249 to 288 (ELIHPVHTVAFHPKYGTFATGGADGIVNIWDPFNRKRIIQ), and 291 to 331 (KFET…NSIT). The segment at 322 to 343 (PSPLPNNSITIRHITDPESRPK) is disordered. Residues 334 to 343 (HITDPESRPK) are compositionally biased toward basic and acidic residues.

Belongs to the WD repeat BUB3 family. In terms of assembly, may interact with bub-1; for localization at the kinetochore and the onset of anaphase.

The protein localises to the chromosome. Its subcellular location is the centromere. It localises to the kinetochore. It is found in the nucleus. Has a dual function in spindle-assembly checkpoint signaling and in promoting the establishment of correct kinetochore-microtubule (K-MT) attachments. Promotes the formation of stable end-on bipolar attachments of chromosomes. Necessary for expression and kinetochore localization of bub-1. Plays a role in synapsis checkpoint signaling inducing apoptosis in response to unsynapsed chromosomes and thus controlling chromosomal segregation during oocyte meiosis. The sequence is that of Mitotic checkpoint protein bub-3 from Caenorhabditis elegans.